The primary structure comprises 475 residues: Tryptophan synthase beta chain 2, chloroplastic (475 aa).

Residues 1 to 21 (MATASTAATFRPSSVSASSEL) show a composition bias toward polar residues. Residues 1 to 44 (MATASTAATFRPSSVSASSELTHLRSPSKLPKFTPLPSARSRSS) are disordered. The N-terminal 51 residues, 1 to 51 (MATASTAATFRPSSVSASSELTHLRSPSKLPKFTPLPSARSRSSSSFSVSC), are a transit peptide targeting the chloroplast. T52 is modified (N-acetylthreonine). An N6-(pyridoxal phosphate)lysine modification is found at K170.

It belongs to the TrpB family. In terms of assembly, tetramer of two alpha and two beta chains. It depends on pyridoxal 5'-phosphate as a cofactor.

The protein localises to the plastid. It is found in the chloroplast. The enzyme catalyses (1S,2R)-1-C-(indol-3-yl)glycerol 3-phosphate + L-serine = D-glyceraldehyde 3-phosphate + L-tryptophan + H2O. The protein operates within amino-acid biosynthesis; L-tryptophan biosynthesis; L-tryptophan from chorismate: step 5/5. In terms of biological role, the beta subunit is responsible for the synthesis of L-tryptophan from indole and L-serine. In Arabidopsis thaliana (Mouse-ear cress), this protein is Tryptophan synthase beta chain 2, chloroplastic (TSB2).